A 187-amino-acid chain; its full sequence is Peptidyl-tRNA hydrolase (187 aa).

Residue tyrosine 15 coordinates tRNA. The Proton acceptor role is filled by histidine 20. 3 residues coordinate tRNA: tyrosine 64, asparagine 66, and asparagine 112.

Belongs to the PTH family. As to quaternary structure, monomer.

It is found in the cytoplasm. The enzyme catalyses an N-acyl-L-alpha-aminoacyl-tRNA + H2O = an N-acyl-L-amino acid + a tRNA + H(+). Functionally, hydrolyzes ribosome-free peptidyl-tRNAs (with 1 or more amino acids incorporated), which drop off the ribosome during protein synthesis, or as a result of ribosome stalling. Catalyzes the release of premature peptidyl moieties from peptidyl-tRNA molecules trapped in stalled 50S ribosomal subunits, and thus maintains levels of free tRNAs and 50S ribosomes. The protein is Peptidyl-tRNA hydrolase of Phocaeicola vulgatus (strain ATCC 8482 / DSM 1447 / JCM 5826 / CCUG 4940 / NBRC 14291 / NCTC 11154) (Bacteroides vulgatus).